Reading from the N-terminus, the 675-residue chain is Neurexin-3b-beta (675 aa).

Residues 1-30 (MRPHFKTRYPQWLSCMLPLVTGCVFGAVWG) form the signal peptide. The Extracellular segment spans residues 31 to 599 (SNLDSTVVLS…EVIRESSSTT (569 aa)). Positions 81–281 (ATYIFGKGGG…HANIKINGSV (201 aa)) constitute a Laminin G-like domain. Disordered regions lie at residues 313–337 (TTLSTTTTRKQRSPPTIQTTDDIVS) and 490–534 (FKPK…MNNR). Residues 325-335 (SPPTIQTTDDI) show a composition bias toward polar residues. The helical transmembrane segment at 600-620 (GMVVGIVSAAALCILILLYAM) threads the bilayer. Residues 621–675 (YKYRNRDEGSYQVDETRNYISNSAQNNGTVVKDKQPSTKGASNKRPKDKDKEYYV) are Cytoplasmic-facing. A disordered region spans residues 642–675 (NSAQNNGTVVKDKQPSTKGASNKRPKDKDKEYYV). The segment covering 665–675 (RPKDKDKEYYV) has biased composition (basic and acidic residues).

Belongs to the neurexin family. In terms of processing, processed by alpha-secretase leading to the formation of an extracellular soluble protein as well as a C-terminal membrane-embedded fragment (CTF). Proteolysis of these CTFs by gamma-secretase releases intracellular domains (ICDs) and extracellular peptides.

The protein localises to the membrane. Neuronal cell surface protein that may be involved in cell recognition and cell adhesion. The polypeptide is Neurexin-3b-beta (nrxn3b) (Danio rerio (Zebrafish)).